The chain runs to 431 residues: Glucose-1-phosphate adenylyltransferase (431 aa).

Residues glycine 163, 178-179 (EK), and serine 210 contribute to the alpha-D-glucose 1-phosphate site.

It belongs to the bacterial/plant glucose-1-phosphate adenylyltransferase family. Homotetramer.

The catalysed reaction is alpha-D-glucose 1-phosphate + ATP + H(+) = ADP-alpha-D-glucose + diphosphate. The protein operates within glycan biosynthesis; glycogen biosynthesis. Functionally, involved in the biosynthesis of ADP-glucose, a building block required for the elongation reactions to produce glycogen. Catalyzes the reaction between ATP and alpha-D-glucose 1-phosphate (G1P) to produce pyrophosphate and ADP-Glc. The sequence is that of Glucose-1-phosphate adenylyltransferase from Synechococcus sp. (strain WH7803).